Consider the following 204-residue polypeptide: CASP-like protein 1B2 (204 aa).

The Cytoplasmic portion of the chain corresponds to 1–28 (MASKGEEKPELVGSKQGIVSVTKAKHDQ). The chain crosses the membrane as a helical span at residues 29-49 (IVLVLRVVAFLATASATIVMG). The Extracellular segment spans residues 50–80 (LNQETKTLLVGTIGTTPIRATLKAKFQHTPA). The chain crosses the membrane as a helical span at residues 81–101 (FVFFVVANGLASVYNLVMLGV). Topologically, residues 102–114 (DVFGRKLDCKGLR) are cytoplasmic. Residues 115 to 135 (LVIISILDMVIVAVVAAGASS) form a helical membrane-spanning segment. The Extracellular segment spans residues 136 to 168 (AAFMAELGKNGNSHAKWNKICDKFESFCHQGGG). The chain crosses the membrane as a helical span at residues 169-189 (ALIPSFIALLLLFLISAISII). Residues 190–204 (TLHNQKLTSPHATTP) are Cytoplasmic-facing.

It belongs to the Casparian strip membrane proteins (CASP) family. In terms of assembly, homodimer and heterodimers.

The protein localises to the cell membrane. This Vitis vinifera (Grape) protein is CASP-like protein 1B2.